Consider the following 371-residue polypeptide: uncharacterized protein (371 aa).

This sequence to E.coli YcjY.

This is an uncharacterized protein from Pseudomonas aeruginosa (strain ATCC 15692 / DSM 22644 / CIP 104116 / JCM 14847 / LMG 12228 / 1C / PRS 101 / PAO1).